A 291-amino-acid polypeptide reads, in one-letter code: ATP synthase gamma chain (291 aa).

The protein belongs to the ATPase gamma chain family. In terms of assembly, F-type ATPases have 2 components, CF(1) - the catalytic core - and CF(0) - the membrane proton channel. CF(1) has five subunits: alpha(3), beta(3), gamma(1), delta(1), epsilon(1). CF(0) has three main subunits: a, b and c.

It localises to the cell inner membrane. In terms of biological role, produces ATP from ADP in the presence of a proton gradient across the membrane. The gamma chain is believed to be important in regulating ATPase activity and the flow of protons through the CF(0) complex. In Pelodictyon phaeoclathratiforme (strain DSM 5477 / BU-1), this protein is ATP synthase gamma chain.